The chain runs to 271 residues: Phosphonates import ATP-binding protein PhnC 2 (271 aa).

The 244-residue stretch at 2 to 245 (LVVEGLTCRF…IARELYDLEA (244 aa)) folds into the ABC transporter domain. 34-41 (GRSGAGKS) is a binding site for ATP.

This sequence belongs to the ABC transporter superfamily. Phosphonates importer (TC 3.A.1.9.1) family. In terms of assembly, the complex is composed of two ATP-binding proteins (PhnC), two transmembrane proteins (PhnE) and a solute-binding protein (PhnD).

Its subcellular location is the cell inner membrane. It carries out the reaction phosphonate(out) + ATP + H2O = phosphonate(in) + ADP + phosphate + H(+). In terms of biological role, part of the ABC transporter complex PhnCDE involved in phosphonates import. Responsible for energy coupling to the transport system. This chain is Phosphonates import ATP-binding protein PhnC 2, found in Rhodopseudomonas palustris (strain BisB18).